Consider the following 355-residue polypeptide: tRNA pseudouridine synthase D (355 aa).

The active-site Nucleophile is the aspartate 84. The TRUD domain occupies 160–306 (GVPNYFGLQR…MAHERRILRL (147 aa)).

It belongs to the pseudouridine synthase TruD family.

The catalysed reaction is uridine(13) in tRNA = pseudouridine(13) in tRNA. Its function is as follows. Responsible for synthesis of pseudouridine from uracil-13 in transfer RNAs. This is tRNA pseudouridine synthase D from Pseudomonas aeruginosa (strain LESB58).